Consider the following 267-residue polypeptide: GTP cyclohydrolase FolE2 (267 aa).

Belongs to the GTP cyclohydrolase IV family.

The catalysed reaction is GTP + H2O = 7,8-dihydroneopterin 3'-triphosphate + formate + H(+). It functions in the pathway cofactor biosynthesis; 7,8-dihydroneopterin triphosphate biosynthesis; 7,8-dihydroneopterin triphosphate from GTP: step 1/1. Functionally, converts GTP to 7,8-dihydroneopterin triphosphate. In Nitrosococcus oceani (strain ATCC 19707 / BCRC 17464 / JCM 30415 / NCIMB 11848 / C-107), this protein is GTP cyclohydrolase FolE2.